A 239-amino-acid polypeptide reads, in one-letter code: Ribonuclease PH (239 aa).

Phosphate-binding positions include Arg-87 and 125–127 (GTR).

The protein belongs to the RNase PH family. As to quaternary structure, homohexameric ring arranged as a trimer of dimers.

It carries out the reaction tRNA(n+1) + phosphate = tRNA(n) + a ribonucleoside 5'-diphosphate. In terms of biological role, phosphorolytic 3'-5' exoribonuclease that plays an important role in tRNA 3'-end maturation. Removes nucleotide residues following the 3'-CCA terminus of tRNAs; can also add nucleotides to the ends of RNA molecules by using nucleoside diphosphates as substrates, but this may not be physiologically important. Probably plays a role in initiation of 16S rRNA degradation (leading to ribosome degradation) during starvation. The chain is Ribonuclease PH from Cyanothece sp. (strain PCC 7425 / ATCC 29141).